Reading from the N-terminus, the 583-residue chain is ATP-dependent lipid A-core flippase (583 aa).

5 consecutive transmembrane segments (helical) span residues 27–47 (LAVA…MVSL), 69–89 (LLVF…TYCL), 142–162 (ALVS…LMFY), 165–185 (WQLS…IGFV), and 249–269 (AAAN…VLYL). The region spanning 28 to 310 (AVAVVALIIN…LTNVTSQFQR (283 aa)) is the ABC transmembrane type-1 domain. One can recognise an ABC transporter domain in the interval 342–578 (VNVKDISFTY…DGAYAQLHRI (237 aa)). An ATP-binding site is contributed by 376–383 (GRSGSGKS).

The protein belongs to the ABC transporter superfamily. Lipid exporter (TC 3.A.1.106) family. As to quaternary structure, homodimer.

It localises to the cell inner membrane. It carries out the reaction ATP + H2O + lipid A-core oligosaccharideSide 1 = ADP + phosphate + lipid A-core oligosaccharideSide 2.. Involved in lipopolysaccharide (LPS) biosynthesis. Translocates lipid A-core from the inner to the outer leaflet of the inner membrane. Transmembrane domains (TMD) form a pore in the inner membrane and the ATP-binding domain (NBD) is responsible for energy generation. The polypeptide is ATP-dependent lipid A-core flippase (Vibrio vulnificus (strain YJ016)).